The primary structure comprises 640 residues: Insulin-like growth factor 1 receptor (640 aa).

Fibronectin type-III domains follow at residues 5-101 (VPRP…TMPA) and 107-200 (IPGP…VQAK). The Extracellular portion of the chain corresponds to 14–208 (EVMQIANTTM…AKTTYENFIH (195 aa)). 5 N-linked (GlcNAc...) asparagine glycosylation sites follow: N20, N29, N37, N173, and N186. A helical membrane pass occupies residues 209 to 232 (LMIALPIAVLLIVGGLVIMLYVFH). Topologically, residues 233–640 (RKRNSSRLGN…ALPLPQSSTC (408 aa)) are cytoplasmic. Residues 250–253 (NPEY) carry the IRS1- and SHC1-binding motif. Position 253 is a phosphotyrosine (Y253). Residues 272 to 547 (ITMSRELGQG…SVKDEMEAGF (276 aa)) form the Protein kinase domain. ATP is bound by residues 278–286 (LGQGSFGMV) and K306. The Proton acceptor role is filled by D408. Phosphotyrosine; by autocatalysis is present on residues Y434, Y438, and Y439. Glycyl lysine isopeptide (Lys-Gly) (interchain with G-Cter in ubiquitin) cross-links involve residues K441 and K444. At S551 the chain carries Phosphoserine; by GSK3-beta. At S555 the chain carries Phosphoserine. The interval 555–640 (SEENKPPEPE…ALPLPQSSTC (86 aa)) is disordered. A compositionally biased stretch (acidic residues) spans 563-572 (PEELDLEPEN). Over residues 573 to 589 (MESVPLDPSASSASLPL) the composition is skewed to low complexity. Basic and acidic residues predominate over residues 590 to 599 (PDRHSGHKAE).

The protein belongs to the protein kinase superfamily. Tyr protein kinase family. Insulin receptor subfamily. In terms of assembly, tetramer of 2 alpha and 2 beta chains linked by disulfide bonds. The alpha chains contribute to the formation of the ligand-binding domain, while the beta chain carries the kinase domain. Interacts with PIK3R1 and with the PTB/PID domains of IRS1 and SHC1 in vitro when autophosphorylated on tyrosine residues. Forms a hybrid receptor with INSR, the hybrid is a tetramer consisting of 1 alpha chain and 1 beta chain of INSR and 1 alpha chain and 1 beta chain of IGF1R. Interacts with ARRB1 and ARRB2. Interacts with GRB10. Interacts with RACK1. Interacts with SOCS1, SOCS2 and SOCS3. Interacts with 14-3-3 proteins. Interacts with NMD2. Interacts with MAP3K5. Interacts with STAT3. Interacts (nascent precursor form) with ZFAND2B. In terms of processing, autophosphorylated on tyrosine residues in response to ligand binding. Autophosphorylation occurs in trans, i.e. one subunit of the dimeric receptor phosphorylates tyrosine residues on the other subunit. Autophosphorylation occurs in a sequential manner; Tyr-438 is predominantly phosphorylated first, followed by phosphorylation of Tyr-434 and Tyr-439. While every single phosphorylation increases kinase activity, all three tyrosine residues in the kinase activation loop (Tyr-438, Tyr-434 and Tyr-439) have to be phosphorylated for optimal activity. Can be autophosphorylated at additional tyrosine residues (in vitro). Autophosphorylated is followed by phosphorylation of juxtamembrane tyrosines and C-terminal serines. May also be phosphorylated at Tyr-434 and Tyr-439 by mTORC2. Phosphorylation of Tyr-253 is required for IRS1- and SHC1-binding. Phosphorylation of Ser-551 by GSK-3beta restrains kinase activity and promotes cell surface expression, it requires a priming phosphorylation at Ser-555. Dephosphorylated by PTPN1. Post-translationally, polyubiquitinated at Lys-441 and Lys-444 through both 'Lys-48' and 'Lys-29' linkages, promoting receptor endocytosis and subsequent degradation by the proteasome. Ubiquitination is facilitated by pre-existing phosphorylation. Sumoylated with SUMO1. In terms of processing, controlled by regulated intramembrane proteolysis (RIP). Undergoes metalloprotease-dependent constitutive ectodomain shedding to produce a membrane-anchored 52 kDa C-Terminal fragment which is further processed by presenilin gamma-secretase to yield an intracellular 50 kDa fragment.

It localises to the cell membrane. The enzyme catalyses L-tyrosyl-[protein] + ATP = O-phospho-L-tyrosyl-[protein] + ADP + H(+). Activated by autophosphorylation at Tyr-434, Tyr-438 and Tyr-439 on the kinase activation loop; phosphorylation at all three tyrosine residues is required for optimal kinase activity. Inhibited by MSC1609119A-1, BMS-754807, PQIP, benzimidazole pyridinone, isoquinolinedione, bis-azaindole, 3-cyanoquinoline, 2,4-bis-arylamino-1,3-pyrimidine, pyrrolopyrimidine, pyrrole-5-carboxaldehyde, picropodophyllin (PPP), tyrphostin derivatives. While most inhibitors bind to the ATP binding pocket, MSC1609119A-1 functions as allosteric inhibitor and binds close to the DFG motif and the activation loop. In terms of biological role, receptor tyrosine kinase which mediates actions of insulin-like growth factor 1 (IGF1). Binds IGF1 with high affinity and IGF2 and insulin (INS) with a lower affinity. The activated IGF1R is involved in cell growth and survival control. IGF1R is crucial for tumor transformation and survival of malignant cell. Ligand binding activates the receptor kinase, leading to receptor autophosphorylation, and tyrosines phosphorylation of multiple substrates, that function as signaling adapter proteins including, the insulin-receptor substrates (IRS1/2), Shc and 14-3-3 proteins. Phosphorylation of IRSs proteins lead to the activation of two main signaling pathways: the PI3K-AKT/PKB pathway and the Ras-MAPK pathway. The result of activating the MAPK pathway is increased cellular proliferation, whereas activating the PI3K pathway inhibits apoptosis and stimulates protein synthesis. Phosphorylated IRS1 can activate the 85 kDa regulatory subunit of PI3K (PIK3R1), leading to activation of several downstream substrates, including protein AKT/PKB. AKT phosphorylation, in turn, enhances protein synthesis through mTOR activation and triggers the antiapoptotic effects of IGFIR through phosphorylation and inactivation of BAD. In parallel to PI3K-driven signaling, recruitment of Grb2/SOS by phosphorylated IRS1 or Shc leads to recruitment of Ras and activation of the ras-MAPK pathway. In addition to these two main signaling pathways IGF1R signals also through the Janus kinase/signal transducer and activator of transcription pathway (JAK/STAT). Phosphorylation of JAK proteins can lead to phosphorylation/activation of signal transducers and activators of transcription (STAT) proteins. In particular activation of STAT3, may be essential for the transforming activity of IGF1R. The JAK/STAT pathway activates gene transcription and may be responsible for the transforming activity. JNK kinases can also be activated by the IGF1R. IGF1 exerts inhibiting activities on JNK activation via phosphorylation and inhibition of MAP3K5/ASK1, which is able to directly associate with the IGF1R. When present in a hybrid receptor with INSR, binds IGF1. The protein is Insulin-like growth factor 1 receptor (IGF1R) of Bos taurus (Bovine).